The sequence spans 70 residues: Large ribosomal subunit protein uL29 (70 aa).

It belongs to the universal ribosomal protein uL29 family.

In Rickettsia bellii (strain OSU 85-389), this protein is Large ribosomal subunit protein uL29.